Here is a 259-residue protein sequence, read N- to C-terminus: Type III pantothenate kinase (259 aa).

Residue 6 to 13 (DAGNTNIV) participates in ATP binding. Residues Y100 and 107-110 (GADR) contribute to the substrate site. Catalysis depends on D109, which acts as the Proton acceptor. D129 is a binding site for K(+). An ATP-binding site is contributed by T132. T184 contributes to the substrate binding site.

It belongs to the type III pantothenate kinase family. In terms of assembly, homodimer. NH4(+) is required as a cofactor. Requires K(+) as cofactor.

Its subcellular location is the cytoplasm. The enzyme catalyses (R)-pantothenate + ATP = (R)-4'-phosphopantothenate + ADP + H(+). It participates in cofactor biosynthesis; coenzyme A biosynthesis; CoA from (R)-pantothenate: step 1/5. Catalyzes the phosphorylation of pantothenate (Pan), the first step in CoA biosynthesis. The polypeptide is Type III pantothenate kinase (Clostridium novyi (strain NT)).